The sequence spans 218 residues: GTP cyclohydrolase 1 (218 aa).

Residues cysteine 107, histidine 110, and cysteine 178 each coordinate Zn(2+).

This sequence belongs to the GTP cyclohydrolase I family. In terms of assembly, homomer.

It catalyses the reaction GTP + H2O = 7,8-dihydroneopterin 3'-triphosphate + formate + H(+). It functions in the pathway cofactor biosynthesis; 7,8-dihydroneopterin triphosphate biosynthesis; 7,8-dihydroneopterin triphosphate from GTP: step 1/1. The polypeptide is GTP cyclohydrolase 1 (Azorhizobium caulinodans (strain ATCC 43989 / DSM 5975 / JCM 20966 / LMG 6465 / NBRC 14845 / NCIMB 13405 / ORS 571)).